We begin with the raw amino-acid sequence, 157 residues long: Glucosamine 6-phosphate N-acetyltransferase 1 (157 aa).

One can recognise an N-acetyltransferase domain in the interval 9 to 157; the sequence is ISFRPLDIDD…SIYLPTPPKL (149 aa). Substrate-binding positions include Thr31, 78–81, and 90–92; these read KFIR and EDI. Residue 100-105 participates in acetyl-CoA binding; that stretch reads GKNLGL. Residue 121-122 participates in substrate binding; sequence YK. 135-137 contributes to the acetyl-CoA binding site; sequence YEK.

The protein belongs to the acetyltransferase family. GNA1 subfamily.

It carries out the reaction D-glucosamine 6-phosphate + acetyl-CoA = N-acetyl-D-glucosamine 6-phosphate + CoA + H(+). Its pathway is nucleotide-sugar biosynthesis; UDP-N-acetyl-alpha-D-glucosamine biosynthesis; N-acetyl-alpha-D-glucosamine 1-phosphate from alpha-D-glucosamine 6-phosphate (route I): step 1/2. The sequence is that of Glucosamine 6-phosphate N-acetyltransferase 1 (gna1) from Dictyostelium discoideum (Social amoeba).